The following is a 110-amino-acid chain: UPF0060 membrane protein Bcep18194_A4425 (110 aa).

Transmembrane regions (helical) follow at residues 9–29 (ALFAATALAEIVGCYLPWLVL), 34–54 (PVWLLVPAALSLALFAWLLTL), 66–86 (YGGVYIAVALVWLRVVDGVAL), and 88–108 (RWDVAGAVLALGGMAVIALQP).

The protein belongs to the UPF0060 family.

The protein localises to the cell inner membrane. The sequence is that of UPF0060 membrane protein Bcep18194_A4425 from Burkholderia lata (strain ATCC 17760 / DSM 23089 / LMG 22485 / NCIMB 9086 / R18194 / 383).